The following is a 274-amino-acid chain: Regulator of G-protein signaling rgs-11 (274 aa).

The 120-residue stretch at 137–256 folds into the RGS domain; it reads SPGLLAASKY…LEDPLYLDLL (120 aa).

This is Regulator of G-protein signaling rgs-11 (rgs-11) from Caenorhabditis elegans.